The primary structure comprises 635 residues: MERWNINDSSKIYNLDNWGADLFSINKKGNVCVHPSPSSKSSIDLRVLVDDLIKRKIKPPILLRFMDVLQGRIASINRAFKSAISENDYPAKYQTFFPIKVNQQRQVVEAIASYGKRYNIGLEVGSKPELVAGISISSGNNLPIICNGYKDSEYIETVLYATAIGYDITLVIEKLFELEKVIELVKKTGIQPRLGIRVKLSSKGTGKWATSGGEDAKFGLRMSEIIAAIDLLEENGLLDRVKLIHFHIGSQITKIDKIKTALIEGARVYTELRKMGMGIEFVDIGGGLGVDYDGSKSSYFSSVNYSVEEYANDVIYQIKNICDDAGVECPNIISESGRATVAHYSVLVTNVLNTNTQRLTPDFEEELAAAEKLAPTVKKLVDIHKSIDRYSLREDYHDTVQLIQEAVSLFNLGYLTLNERAMAEWLYGKIIKKINSIVEKIKPIPEELQNFQLALRQTYFANFSLFQSIPDSWAIDQLFPIVPIQRLNQKPDVIASIADITCDSDGEITSFVGENGRTKFLPLHKIRKDEDYYIGFFLIGAYQEILGDMHNLFGDTNAVHITFNKKTGYMIDTVINGDACWESLKYVQYKGPEILKRVREHLEKGVAQRKVSIEESSHFIELLDRTLLGYTYLGE.

Lysine 100 is subject to N6-(pyridoxal phosphate)lysine. 282–292 (VDIGGGLGVDY) serves as a coordination point for substrate.

Belongs to the Orn/Lys/Arg decarboxylase class-II family. SpeA subfamily. Requires Mg(2+) as cofactor. The cofactor is pyridoxal 5'-phosphate.

It carries out the reaction L-arginine + H(+) = agmatine + CO2. It functions in the pathway amine and polyamine biosynthesis; agmatine biosynthesis; agmatine from L-arginine: step 1/1. Its function is as follows. Catalyzes the biosynthesis of agmatine from arginine. This Geotalea daltonii (strain DSM 22248 / JCM 15807 / FRC-32) (Geobacter daltonii) protein is Biosynthetic arginine decarboxylase.